The primary structure comprises 273 residues: tRNA (guanine-N(7)-)-methyltransferase A (273 aa).

6 residues coordinate S-adenosyl-L-methionine: G86, E109, R111, N142, A143, and L162. D165 is an active-site residue. An alphaC helix region spans residues 166-174; the sequence is PHFKKTKHK. Residues T240 and E242 each contribute to the S-adenosyl-L-methionine site. Residues 240-248 form an alpha6 helix region; sequence TEEGKKVQR.

The protein belongs to the class I-like SAM-binding methyltransferase superfamily. TrmB family. As to quaternary structure, catalytic component of the METTL1-WDR4 complex, composed of mettl1 and wdr4.

It localises to the nucleus. The enzyme catalyses guanosine(46) in tRNA + S-adenosyl-L-methionine = N(7)-methylguanosine(46) in tRNA + S-adenosyl-L-homocysteine. It catalyses the reaction a guanosine in mRNA + S-adenosyl-L-methionine = an N(7)-methylguanosine in mRNA + S-adenosyl-L-homocysteine. It carries out the reaction a guanosine in miRNA + S-adenosyl-L-methionine = an N(7)-methylguanosine in miRNA + S-adenosyl-L-homocysteine. Its pathway is tRNA modification; N(7)-methylguanine-tRNA biosynthesis. Its function is as follows. Catalytic component of METTL1-WDR4 methyltransferase complex that mediates the formation of N(7)-methylguanine in a subset of RNA species, such as tRNAs, mRNAs and microRNAs (miRNAs). Catalyzes the formation of N(7)-methylguanine at position 46 (m7G46) in a large subset of tRNAs that contain the 5'-RAGGU-3' motif within the variable loop. M7G46 interacts with C13-G22 in the D-loop to stabilize tRNA tertiary structure and protect tRNAs from decay. Also acts as a methyltransferase for a subset of internal N(7)-methylguanine in mRNAs. Internal N(7)-methylguanine methylation of mRNAs in response to stress promotes their relocalization to stress granules, thereby suppressing their translation. Also methylates a specific subset of miRNAs. This is tRNA (guanine-N(7)-)-methyltransferase A (mettl1-A) from Xenopus tropicalis (Western clawed frog).